A 464-amino-acid chain; its full sequence is 3-isopropylmalate dehydratase large subunit (464 aa).

3 residues coordinate [4Fe-4S] cluster: Cys337, Cys397, and Cys400.

The protein belongs to the aconitase/IPM isomerase family. LeuC type 1 subfamily. As to quaternary structure, heterodimer of LeuC and LeuD. [4Fe-4S] cluster is required as a cofactor.

It catalyses the reaction (2R,3S)-3-isopropylmalate = (2S)-2-isopropylmalate. It functions in the pathway amino-acid biosynthesis; L-leucine biosynthesis; L-leucine from 3-methyl-2-oxobutanoate: step 2/4. Catalyzes the isomerization between 2-isopropylmalate and 3-isopropylmalate, via the formation of 2-isopropylmaleate. The protein is 3-isopropylmalate dehydratase large subunit of Bacillus cytotoxicus (strain DSM 22905 / CIP 110041 / 391-98 / NVH 391-98).